Consider the following 206-residue polypeptide: Thiamine-phosphate synthase (206 aa).

Residues 39-43 (QYREK) and N74 each bind 4-amino-2-methyl-5-(diphosphooxymethyl)pyrimidine. 2 residues coordinate Mg(2+): D75 and D94. S112 is a binding site for 4-amino-2-methyl-5-(diphosphooxymethyl)pyrimidine. Position 138–140 (138–140 (TNT)) interacts with 2-[(2R,5Z)-2-carboxy-4-methylthiazol-5(2H)-ylidene]ethyl phosphate. K141 is a binding site for 4-amino-2-methyl-5-(diphosphooxymethyl)pyrimidine. 2-[(2R,5Z)-2-carboxy-4-methylthiazol-5(2H)-ylidene]ethyl phosphate is bound by residues G170 and 190 to 191 (IS).

It belongs to the thiamine-phosphate synthase family. It depends on Mg(2+) as a cofactor.

The enzyme catalyses 2-[(2R,5Z)-2-carboxy-4-methylthiazol-5(2H)-ylidene]ethyl phosphate + 4-amino-2-methyl-5-(diphosphooxymethyl)pyrimidine + 2 H(+) = thiamine phosphate + CO2 + diphosphate. It carries out the reaction 2-(2-carboxy-4-methylthiazol-5-yl)ethyl phosphate + 4-amino-2-methyl-5-(diphosphooxymethyl)pyrimidine + 2 H(+) = thiamine phosphate + CO2 + diphosphate. It catalyses the reaction 4-methyl-5-(2-phosphooxyethyl)-thiazole + 4-amino-2-methyl-5-(diphosphooxymethyl)pyrimidine + H(+) = thiamine phosphate + diphosphate. Its pathway is cofactor biosynthesis; thiamine diphosphate biosynthesis; thiamine phosphate from 4-amino-2-methyl-5-diphosphomethylpyrimidine and 4-methyl-5-(2-phosphoethyl)-thiazole: step 1/1. Its function is as follows. Condenses 4-methyl-5-(beta-hydroxyethyl)thiazole monophosphate (THZ-P) and 2-methyl-4-amino-5-hydroxymethyl pyrimidine pyrophosphate (HMP-PP) to form thiamine monophosphate (TMP). The polypeptide is Thiamine-phosphate synthase (Oceanobacillus iheyensis (strain DSM 14371 / CIP 107618 / JCM 11309 / KCTC 3954 / HTE831)).